A 296-amino-acid polypeptide reads, in one-letter code: Acetylglutamate kinase (296 aa).

Residues 69-70, Arg91, and Asn193 contribute to the substrate site; that span reads GG.

This sequence belongs to the acetylglutamate kinase family. ArgB subfamily.

The protein localises to the cytoplasm. It catalyses the reaction N-acetyl-L-glutamate + ATP = N-acetyl-L-glutamyl 5-phosphate + ADP. It functions in the pathway amino-acid biosynthesis; L-arginine biosynthesis; N(2)-acetyl-L-ornithine from L-glutamate: step 2/4. In terms of biological role, catalyzes the ATP-dependent phosphorylation of N-acetyl-L-glutamate. In Verminephrobacter eiseniae (strain EF01-2), this protein is Acetylglutamate kinase.